Reading from the N-terminus, the 356-residue chain is Histidinol-phosphate aminotransferase (356 aa).

An N6-(pyridoxal phosphate)lysine modification is found at Lys213.

The protein belongs to the class-II pyridoxal-phosphate-dependent aminotransferase family. Histidinol-phosphate aminotransferase subfamily. As to quaternary structure, homodimer. Pyridoxal 5'-phosphate is required as a cofactor.

It catalyses the reaction L-histidinol phosphate + 2-oxoglutarate = 3-(imidazol-4-yl)-2-oxopropyl phosphate + L-glutamate. Its pathway is amino-acid biosynthesis; L-histidine biosynthesis; L-histidine from 5-phospho-alpha-D-ribose 1-diphosphate: step 7/9. This Clostridium novyi (strain NT) protein is Histidinol-phosphate aminotransferase.